The following is a 222-amino-acid chain: Adenylate kinase (222 aa).

A propeptide (removed in mature form) is located at residue serine 2. N-acetylserine is present on residues serine 2 and serine 3. 16–21 (GAGKGT) lines the ATP pocket. Positions 36–65 (ATGDMLRSQIAKGTQLGLEAKKIMDQGGLV) are NMP. Residues threonine 37, arginine 42, 63–65 (GLV), 92–95 (GFPR), and glutamine 99 each bind AMP. The segment at 133-170 (GRLIHPASGRSYHKIFNPPKEDMKDDVTGEALVQRSDD) is LID. ATP is bound by residues arginine 134 and 143–144 (SY). The AMP site is built by arginine 167 and arginine 178. Glutamine 206 is an ATP binding site.

It belongs to the adenylate kinase family. AK2 subfamily. As to quaternary structure, monomer.

It localises to the cytoplasm. It is found in the cytosol. Its subcellular location is the mitochondrion intermembrane space. It carries out the reaction AMP + ATP = 2 ADP. Catalyzes the reversible transfer of the terminal phosphate group between ATP and AMP. Plays an important role in cellular energy homeostasis and in adenine nucleotide metabolism. Adenylate kinase activity is critical for regulation of the phosphate utilization and the AMP de novo biosynthesis pathways. The sequence is that of Adenylate kinase from Saccharomyces cerevisiae (strain YJM789) (Baker's yeast).